The primary structure comprises 284 residues: Polyamine aminopropyltransferase (284 aa).

Residues 4–238 (EVWNTERLHD…GPMALGWGSH (235 aa)) enclose the PABS domain. Residue Gln33 participates in S-methyl-5'-thioadenosine binding. Spermidine-binding residues include His64 and Asp88. Residues Glu108 and 140–141 (DG) contribute to the S-methyl-5'-thioadenosine site. Residue Asp158 is the Proton acceptor of the active site. 158 to 161 (DSTD) is a binding site for spermidine. Pro165 provides a ligand contact to S-methyl-5'-thioadenosine.

Belongs to the spermidine/spermine synthase family. In terms of assembly, homodimer or homotetramer.

The protein localises to the cytoplasm. The enzyme catalyses S-adenosyl 3-(methylsulfanyl)propylamine + putrescine = S-methyl-5'-thioadenosine + spermidine + H(+). Its pathway is amine and polyamine biosynthesis; spermidine biosynthesis; spermidine from putrescine: step 1/1. Its function is as follows. Catalyzes the irreversible transfer of a propylamine group from the amino donor S-adenosylmethioninamine (decarboxy-AdoMet) to putrescine (1,4-diaminobutane) to yield spermidine. This Ruegeria sp. (strain TM1040) (Silicibacter sp.) protein is Polyamine aminopropyltransferase.